Here is a 20-residue protein sequence, read N- to C-terminus: RGSXLTILPLRNKIDLFYVG.

It belongs to the peptidase A1 family. Post-translationally, N-glycosylated. In terms of tissue distribution, expressed in chorionic epithelium (trophectoderm).

The protein localises to the secreted. It is found in the extracellular space. This is Pregnancy-associated glycoprotein 73B from Bubalus bubalis (Domestic water buffalo).